The chain runs to 72 residues: Crustacean hyperglycemic hormone B (72 aa).

The residue at position 1 (Q1) is a Pyrrolidone carboxylic acid. F3 is modified (D-phenylalanine; in form CHHB-II). Cystine bridges form between C7-C43, C23-C39, and C26-C52. V72 is modified (valine amide).

In terms of processing, stereoinversion of L-Phe (in CHHB-I) to D-Phe (in CHHB-II).

It localises to the secreted. Its function is as follows. Hormone found in the sinus gland of isopods and decapods which controls the blood sugar level. Has a secretagogue action over the amylase released from the midgut gland. May act as a stress hormone and may be involved in the control of molting and reproduction. The chain is Crustacean hyperglycemic hormone B from Cherax destructor (Common yabby crayfish).